We begin with the raw amino-acid sequence, 115 residues long: Large ribosomal subunit protein bL19 (115 aa).

It belongs to the bacterial ribosomal protein bL19 family.

In terms of biological role, this protein is located at the 30S-50S ribosomal subunit interface and may play a role in the structure and function of the aminoacyl-tRNA binding site. The sequence is that of Large ribosomal subunit protein bL19 from Wigglesworthia glossinidia brevipalpis.